Here is a 191-residue protein sequence, read N- to C-terminus: Protein Ves (191 aa).

Belongs to the Ves family.

This chain is Protein Ves, found in Escherichia coli O7:K1 (strain IAI39 / ExPEC).